The primary structure comprises 260 residues: uncharacterized protein (260 aa).

Positions 1 to 22 (MGYLKRFALYISILVLIVMVAG) are cleaved as a signal peptide. Residue C23 is the site of N-palmitoyl cysteine attachment. C23 carries the S-diacylglycerol cysteine lipid modification.

This sequence belongs to the staphylococcal tandem lipoprotein family.

It is found in the cell membrane. This is an uncharacterized protein from Staphylococcus aureus (strain bovine RF122 / ET3-1).